Consider the following 201-residue polypeptide: Large ribosomal subunit protein eL15A (201 aa).

The tract at residues 161–182 (SRGLTSIGKKSRGIGKGHRFNN) is disordered. Positions 169–179 (KKSRGIGKGHR) are enriched in basic residues.

The protein belongs to the eukaryotic ribosomal protein eL15 family. In terms of assembly, component of the large ribosomal subunit (LSU). Mature yeast ribosomes consist of a small (40S) and a large (60S) subunit. The 40S small subunit contains 1 molecule of ribosomal RNA (18S rRNA) and at least 33 different proteins. The large 60S subunit contains 3 rRNA molecules (25S, 5.8S and 5S rRNA) and at least 46 different proteins.

It localises to the cytoplasm. The protein resides in the nucleus. Its subcellular location is the nucleolus. Its function is as follows. Component of the ribosome, a large ribonucleoprotein complex responsible for the synthesis of proteins in the cell. The small ribosomal subunit (SSU) binds messenger RNAs (mRNAs) and translates the encoded message by selecting cognate aminoacyl-transfer RNA (tRNA) molecules. The large subunit (LSU) contains the ribosomal catalytic site termed the peptidyl transferase center (PTC), which catalyzes the formation of peptide bonds, thereby polymerizing the amino acids delivered by tRNAs into a polypeptide chain. The nascent polypeptides leave the ribosome through a tunnel in the LSU and interact with protein factors that function in enzymatic processing, targeting, and the membrane insertion of nascent chains at the exit of the ribosomal tunnel. This chain is Large ribosomal subunit protein eL15A (rpl15), found in Schizosaccharomyces pombe (strain 972 / ATCC 24843) (Fission yeast).